The primary structure comprises 1510 residues: ABC transporter C family MRP4 (1510 aa).

The next 12 membrane-spanning stretches (helical) occupy residues 12 to 32, 55 to 75, 78 to 98, 109 to 129, 138 to 158, 177 to 197, 319 to 339, 342 to 362, 373 to 393, 427 to 447, 453 to 473, and 540 to 560; these read EAVA…LLLL, PAVV…AGAW, AVLA…SYEV, ALLL…LALQ, FPAL…VIAY, MVAN…GVMG, TFAA…SYFV, LSGN…FFVA, WYLG…AMVY, AWYF…LAIL, IAMV…VPVA, and FVFW…CILL. Residues 320 to 595 form the ABC transmembrane type-1 1 domain; it reads FAAVNTIVSY…FPDLISMMAQ (276 aa). The region spanning 629–852 is the ABC transporter 1 domain; it reads VDIKDGAFSW…GTDFNALVSA (224 aa). An ATP-binding site is contributed by 664–671; it reads GVIGSGKS. A disordered region spans residues 889–925; it reads LKNKMCENGQPSNTRGIKEKKKKEERKKKRTVQEEER. Over residues 906–918 the composition is skewed to basic residues; the sequence is KEKKKKEERKKKR. The next 6 helical transmembrane spans lie at 945–965, 985–1005, 1060–1082, 1086–1108, 1154–1174, and 1179–1199; these read GTLI…QIAS, SVVL…FVFM, IAFR…AVMS, WQVL…YYIA, LLDC…WLCL, and LSTF…PGTI. Residues 950–1220 form the ABC transmembrane type-1 2 domain; sequence LIILAQTMFQ…GLNLNARMSR (271 aa). The 235-residue stretch at 1267–1501 folds into the ABC transporter 2 domain; sequence IELIDLKVRY…KSSMFIQLVS (235 aa). 1301-1308 provides a ligand contact to ATP; it reads GRTGSGKS.

This sequence belongs to the ABC transporter superfamily. ABCC family. Conjugate transporter (TC 3.A.1.208) subfamily. As to expression, expressed in roots, leaves, stalks, tassels, silks, developing seeds and developing embryos.

The protein localises to the membrane. ABC transporter that may affect phytic acid transport and compartmentalization. May function directly or indirectly in removing phytic acid from the cytosol or in vesicle trafficking. Required for phytic acid accumulation in developing seeds. Phytic acid is the primary storage form of phosphorus in cereal grains and other plant seeds. The sequence is that of ABC transporter C family MRP4 from Zea mays (Maize).